The primary structure comprises 274 residues: Large ribosomal subunit protein uL2 (274 aa).

A disordered region spans residues 1-23 (MAIKIYRPTSPGRRHHSVSSFEE).

This sequence belongs to the universal ribosomal protein uL2 family. In terms of assembly, part of the 50S ribosomal subunit. Forms a bridge to the 30S subunit in the 70S ribosome.

Functionally, one of the primary rRNA binding proteins. Required for association of the 30S and 50S subunits to form the 70S ribosome, for tRNA binding and peptide bond formation. It has been suggested to have peptidyltransferase activity; this is somewhat controversial. Makes several contacts with the 16S rRNA in the 70S ribosome. The sequence is that of Large ribosomal subunit protein uL2 from Dehalococcoides mccartyi (strain ATCC BAA-2100 / JCM 16839 / KCTC 5957 / BAV1).